The sequence spans 515 residues: Envelope glycoprotein (515 aa).

The first 33 residues, 1 to 33 (MPKERRSRRRPEPIIRWVSLTLTLLALCQPIQT), serve as a signal peptide directing secretion. The Extracellular segment spans residues 34–435 (WRCSLSLGNQ…LGLTAWVRET (402 aa)). N-linked (GlcNAc...) asparagine; by host glycans are attached at residues Asn129 and Asn203. A CXXC motif is present at residues 212 to 215 (CAIC). 3 cysteine pairs are disulfide-bonded: Cys212–Cys215, Cys212–Cys392, and Cys384–Cys391. N-linked (GlcNAc...) asparagine; by host glycans are attached at residues Asn230, Asn251, Asn256, Asn271, and Asn287. Residues 304–324 (VAALTLGLALSVGLTGIKVAV) form a fusion peptide region. 2 coiled-coil regions span residues 330–376 (QRLT…WLYI) and 388–420 (NEPCCFLRIQNDSIIRLGDLQPLSQRVSTDWQW). A glycan (N-linked (GlcNAc...) asparagine; by host) is linked at Asn351. The segment at 365-381 (AQNRRGLDWLYIRLGFQ) is immunosuppression. Positions 384 to 392 (CPTINEPCC) match the CX6CC motif. A glycan (N-linked (GlcNAc...) asparagine; by host) is linked at Asn398. A helical membrane pass occupies residues 436–456 (IHSVLSLFLLALLLLFLAPCL). The S-palmitoyl cysteine; by host moiety is linked to residue Cys455. The Cytoplasmic portion of the chain corresponds to 457-515 (IKCLTSRLSKLLRQAPHFPEISFPPKPDSDYQALLPSAPEIYSHLSPTKPDYINLRPCP).

As to quaternary structure, the mature envelope protein (Env) consists of a trimer of SU-TM heterodimers attached by a labile interchain disulfide bond. Specific enzymatic cleavages in vivo yield mature proteins. Envelope glycoproteins are synthesized as an inactive precursor that is N-glycosylated and processed likely by host cell furin or by a furin-like protease in the Golgi to yield the mature SU and TM proteins. The cleavage site between SU and TM requires the minimal sequence [KR]-X-[KR]-R. In terms of processing, the CXXC motif is highly conserved across a broad range of retroviral envelope proteins. It is thought to participate in the formation of a labile disulfide bond possibly with the CX6CC motif present in the transmembrane protein. Isomerization of the intersubunit disulfide bond to an SU intrachain disulfide bond is thought to occur upon receptor recognition in order to allow membrane fusion. Post-translationally, the transmembrane protein is palmitoylated.

It localises to the virion membrane. The protein localises to the host cell membrane. Functionally, the surface protein (SU) attaches the virus to the host cell by binding to its receptor. This interaction triggers the refolding of the transmembrane protein (TM) and is thought to activate its fusogenic potential by unmasking its fusion peptide. Fusion occurs at the host cell plasma membrane. The transmembrane protein (TM) acts as a class I viral fusion protein. Under the current model, the protein has at least 3 conformational states: pre-fusion native state, pre-hairpin intermediate state, and post-fusion hairpin state. During viral and target cell membrane fusion, the coiled coil regions (heptad repeats) assume a trimer-of-hairpins structure, positioning the fusion peptide in close proximity to the C-terminal region of the ectodomain. The formation of this structure appears to drive apposition and subsequent fusion of viral and target cell membranes. Membranes fusion leads to delivery of the nucleocapsid into the cytoplasm. In Bovine leukemia virus (isolate Australian) (BLV), this protein is Envelope glycoprotein (env).